The chain runs to 110 residues: Large ribosomal subunit protein uL22 (110 aa).

Belongs to the universal ribosomal protein uL22 family. In terms of assembly, part of the 50S ribosomal subunit.

Functionally, this protein binds specifically to 23S rRNA; its binding is stimulated by other ribosomal proteins, e.g. L4, L17, and L20. It is important during the early stages of 50S assembly. It makes multiple contacts with different domains of the 23S rRNA in the assembled 50S subunit and ribosome. Its function is as follows. The globular domain of the protein is located near the polypeptide exit tunnel on the outside of the subunit, while an extended beta-hairpin is found that lines the wall of the exit tunnel in the center of the 70S ribosome. In Nitrosomonas eutropha (strain DSM 101675 / C91 / Nm57), this protein is Large ribosomal subunit protein uL22.